Consider the following 367-residue polypeptide: Cobalt-precorrin-5B C(1)-methyltransferase (367 aa).

The protein belongs to the CbiD family.

The enzyme catalyses Co-precorrin-5B + S-adenosyl-L-methionine = Co-precorrin-6A + S-adenosyl-L-homocysteine. Its pathway is cofactor biosynthesis; adenosylcobalamin biosynthesis; cob(II)yrinate a,c-diamide from sirohydrochlorin (anaerobic route): step 6/10. Functionally, catalyzes the methylation of C-1 in cobalt-precorrin-5B to form cobalt-precorrin-6A. The polypeptide is Cobalt-precorrin-5B C(1)-methyltransferase (Thermosynechococcus vestitus (strain NIES-2133 / IAM M-273 / BP-1)).